The sequence spans 456 residues: Exodeoxyribonuclease 7 large subunit (456 aa).

It belongs to the XseA family. In terms of assembly, heterooligomer composed of large and small subunits.

It localises to the cytoplasm. The catalysed reaction is Exonucleolytic cleavage in either 5'- to 3'- or 3'- to 5'-direction to yield nucleoside 5'-phosphates.. Its function is as follows. Bidirectionally degrades single-stranded DNA into large acid-insoluble oligonucleotides, which are then degraded further into small acid-soluble oligonucleotides. This chain is Exodeoxyribonuclease 7 large subunit, found in Shigella dysenteriae serotype 1 (strain Sd197).